We begin with the raw amino-acid sequence, 68 residues long: uncharacterized protein (68 aa).

A signal peptide spans 1–27 (MKGLLCFIYILSAILIGCVFLNKDVEA).

This is an uncharacterized protein from Invertebrate iridescent virus 6 (IIV-6).